Here is an 85-residue protein sequence, read N- to C-terminus: Beta-insect depressant toxin Lqh-dprIT3b (85 aa).

The first 21 residues, 1–21 (MKLLLLLTISASMLIEGLVNA), serve as a signal peptide directing secretion. One can recognise an LCN-type CS-alpha/beta domain in the interval 22–82 (DGYIRGGDGC…EWDYETNTCG (61 aa)). Cystine bridges form between C31-C81, C35-C56, C42-C63, and C46-C65. Position 82 is a glycine amide (G82).

The protein belongs to the long (4 C-C) scorpion toxin superfamily. Sodium channel inhibitor family. Beta subfamily. In terms of tissue distribution, expressed by the venom gland.

Its subcellular location is the secreted. In terms of biological role, depressant insect beta-toxins cause a transient contraction paralysis followed by a slow flaccid paralysis. They bind voltage-independently at site-4 of sodium channels (Nav) and block action potentials, primarily by depolarizing the axonal membrane and suppressing the sodium current. This depressant toxin is active only on insects. It is found in a relatively small amount in the venom, and its activity on insects is 10-fold higher compared to other known depressant toxins. The protein is Beta-insect depressant toxin Lqh-dprIT3b of Leiurus hebraeus (Hebrew deathstalker scorpion).